Here is a 389-residue protein sequence, read N- to C-terminus: Sulfate adenylyltransferase (389 aa).

Belongs to the sulfate adenylyltransferase family.

It catalyses the reaction sulfate + ATP + H(+) = adenosine 5'-phosphosulfate + diphosphate. It functions in the pathway sulfur metabolism; hydrogen sulfide biosynthesis; sulfite from sulfate: step 1/3. The chain is Sulfate adenylyltransferase from Deinococcus deserti (strain DSM 17065 / CIP 109153 / LMG 22923 / VCD115).